The primary structure comprises 66 residues: Large ribosomal subunit protein bL33c (66 aa).

This sequence belongs to the bacterial ribosomal protein bL33 family.

Its subcellular location is the plastid. It localises to the chloroplast. The protein is Large ribosomal subunit protein bL33c of Ceratophyllum demersum (Rigid hornwort).